A 534-amino-acid chain; its full sequence is Ankyrin repeat and LEM domain-containing protein 1 (534 aa).

ANK repeat units lie at residues 4-35 (TACLALRLLAALREEEARAVEELLRLGADPNL), 39-71 (DGAAAVHLAARASHPRALHCLRMLLRWGADPNA), 75-104 (EGLTPVHVAAAWGCCGALELLLSRGGDPTL), and 108-137 (DGLRPLDWALQQRHHNCARVLQELDTPTQP). The 45-residue stretch at 279–323 (HSSVPPMSDLQLLQALRALGYSPGPVTPFTRGHYLRRLQEAQASR) folds into the LEM domain. In terms of domain architecture, GIY-YIG spans 370–485 (KSSFTYLLLD…ALGLQTLTNQ (116 aa)). Residues 498-505 (PPSRRRRL) carry the Nuclear localization signal motif.

As to quaternary structure, interacts (via LEM domain) with BANF1; the interaction may favor BANF1 dimerization. Predominantly expressed in bone marrow, spleen, thymus, colon and ovary. Expressed also to a lesser extent in lymph nodes, liver and testis.

It is found in the cytoplasm. The protein resides in the nucleus. Its function is as follows. Endonuclease that probably plays a role in the DNA damage response and DNA repair. The sequence is that of Ankyrin repeat and LEM domain-containing protein 1 from Mus musculus (Mouse).